Reading from the N-terminus, the 463-residue chain is Elongation factor 1-alpha 2 (463 aa).

Position 2 is a n,N,N-trimethylglycine (glycine 2). Residues 5–242 enclose the tr-type G domain; sequence KTHINIVVIG…DTILPPTRPT (238 aa). A G1 region spans residues 14-21; the sequence is GHVDSGKS. GTP-binding residues include aspartate 17, serine 18, glycine 19, lysine 20, serine 21, and threonine 22. Aspartate 17 provides a ligand contact to Mg(2+). Lysine 36 bears the N6,N6,N6-trimethyllysine; alternate mark. Position 36 is an N6,N6-dimethyllysine; alternate (lysine 36). The residue at position 36 (lysine 36) is an N6-methyllysine; alternate. Residue lysine 55 is modified to N6,N6,N6-trimethyllysine. N6,N6-dimethyllysine is present on lysine 55. Residues 70-74 are G2; sequence GITID. The residue at position 79 (lysine 79) is an N6,N6,N6-trimethyllysine. The G3 stretch occupies residues 91-94; that stretch reads DAPG. Residues asparagine 153, lysine 154, and aspartate 156 each coordinate GTP. A G4 region spans residues 153–156; the sequence is NKMD. Serine 163 carries the phosphoserine modification. The residue at position 165 (lysine 165) is an N6,N6-dimethyllysine; alternate. Lysine 165 bears the N6-methyllysine; alternate mark. Residue lysine 165 is modified to N6,N6,N6-trimethyllysine; alternate; by EEF1AKMT3. Lysine 179 carries the N6-acetyllysine modification. GTP-binding residues include serine 194, glycine 195, and tryptophan 196. The tract at residues 194-196 is G5; that stretch reads SGW. Position 224 is a phosphoserine (serine 224). Threonine 239 carries the post-translational modification Phosphothreonine. 2 positions are modified to 5-glutamyl glycerylphosphorylethanolamine: glutamate 301 and glutamate 374. At lysine 439 the chain carries N6-acetyllysine. Residues 444–463 are disordered; that stretch reads KSGGAGKVTKSAQKAQKAGK.

The protein belongs to the TRAFAC class translation factor GTPase superfamily. Classic translation factor GTPase family. EF-Tu/EF-1A subfamily. As to quaternary structure, homodimer; arranged in a 'head to tail' dimer configuration. Post-translationally, trimethylated at Lys-165 by EEF1AKMT3. Mono-, di-, and trimethylated at Lys-36 by EEF1AKMT4; trimethylated form is predominant. Methylation by EEF1AKMT4 contributes to the fine-tuning of translation rates for a subset of tRNAs. Trimethylated at the N-terminus and dimethylated at Lys-55 by METTL13.

The protein localises to the endoplasmic reticulum membrane. The catalysed reaction is GTP + H2O = GDP + phosphate + H(+). Functionally, translation elongation factor that catalyzes the GTP-dependent binding of aminoacyl-tRNA (aa-tRNA) to the A-site of ribosomes during the elongation phase of protein synthesis. Base pairing between the mRNA codon and the aa-tRNA anticodon promotes GTP hydrolysis, releasing the aa-tRNA from EEF1A1 and allowing its accommodation into the ribosome. The growing protein chain is subsequently transferred from the P-site peptidyl tRNA to the A-site aa-tRNA, extending it by one amino acid through ribosome-catalyzed peptide bond formation. The chain is Elongation factor 1-alpha 2 (Eef1a2) from Rattus norvegicus (Rat).